Reading from the N-terminus, the 71-residue chain is MGITSAGMQSRDAECGERIFTRTVRQVKQQTTVHYFVSPPRPPVKTNPQAKTLISTRLEVATRKKRRVLFI.

The chain is Protein YqgC (yqgC) from Escherichia coli (strain K12).